Reading from the N-terminus, the 456-residue chain is MRSSWIKPRLGKNNVTQMNFARNGYLTEEMDFVAKKENLPSSLIMEEVARGRLIIPANINHLNLEPMSIGIASRCKVNANIGASPNASDINEEVEKLKLAVKYGADTVMDLSTGGVNLDEVRQAIIQESPVPIGTVPVYQALESVHGSIDRLTEDDFLHIIEKHCQQGVDYQTIHAGLLIEHLPKVKGRITGIVSRGGGILAQWMLHHFKQNPLYTRFDDICEIFKKYDCTFSLGDSLRPGCLHDASDDAQLAELKTLGELTRRAWEHNVQVMVEGPGHVPMDQIEFNVRKQMEECSEAPFYVLGPLVTDISPGYDHISSAIGAAMAGWYGTSMLCYVTPKEHLGLPNAEDVREGLIAYKIAAHAADIARHRAGARDRDDELSYARYNFDWNKQFELSLDPERAKQYHDETLPEEIFKKAEFCSMCGPKHCPMNSKISDESLDQLKDKLEECNTSA.

Substrate contacts are provided by residues asparagine 80, methionine 109, tyrosine 139, histidine 175, 195-197 (SRG), 236-239 (DSLR), and glutamate 275. Zn(2+) is bound at residue histidine 279. Residue tyrosine 302 participates in substrate binding. Residue histidine 343 coordinates Zn(2+). The [4Fe-4S] cluster site is built by cysteine 423, cysteine 426, and cysteine 431.

The protein belongs to the ThiC family. [4Fe-4S] cluster is required as a cofactor.

It carries out the reaction 5-amino-1-(5-phospho-beta-D-ribosyl)imidazole + S-adenosyl-L-methionine = 4-amino-2-methyl-5-(phosphooxymethyl)pyrimidine + CO + 5'-deoxyadenosine + formate + L-methionine + 3 H(+). Its pathway is cofactor biosynthesis; thiamine diphosphate biosynthesis. Functionally, catalyzes the synthesis of the hydroxymethylpyrimidine phosphate (HMP-P) moiety of thiamine from aminoimidazole ribotide (AIR) in a radical S-adenosyl-L-methionine (SAM)-dependent reaction. The sequence is that of Phosphomethylpyrimidine synthase from Prochlorococcus marinus (strain MIT 9215).